Reading from the N-terminus, the 176-residue chain is ATP synthase subunit b (176 aa).

Residues 24 to 43 (FAFRVVNFVIFAGIIWKAAG) traverse the membrane as a helical segment.

This sequence belongs to the ATPase B chain family. As to quaternary structure, F-type ATPases have 2 components, F(1) - the catalytic core - and F(0) - the membrane proton channel. F(1) has five subunits: alpha(3), beta(3), gamma(1), delta(1), epsilon(1). F(0) has three main subunits: a(1), b(2) and c(10-14). The alpha and beta chains form an alternating ring which encloses part of the gamma chain. F(1) is attached to F(0) by a central stalk formed by the gamma and epsilon chains, while a peripheral stalk is formed by the delta and b chains.

The protein resides in the cell inner membrane. F(1)F(0) ATP synthase produces ATP from ADP in the presence of a proton or sodium gradient. F-type ATPases consist of two structural domains, F(1) containing the extramembraneous catalytic core and F(0) containing the membrane proton channel, linked together by a central stalk and a peripheral stalk. During catalysis, ATP synthesis in the catalytic domain of F(1) is coupled via a rotary mechanism of the central stalk subunits to proton translocation. In terms of biological role, component of the F(0) channel, it forms part of the peripheral stalk, linking F(1) to F(0). This is ATP synthase subunit b from Nitratidesulfovibrio vulgaris (strain ATCC 29579 / DSM 644 / CCUG 34227 / NCIMB 8303 / VKM B-1760 / Hildenborough) (Desulfovibrio vulgaris).